The following is a 514-amino-acid chain: Steroid 17-alpha-hydroxylase/17,20 lyase (514 aa).

C445 contributes to the heme binding site.

Belongs to the cytochrome P450 family. Heme serves as cofactor.

It is found in the membrane. It catalyses the reaction a C21-steroid + reduced [NADPH--hemoprotein reductase] + O2 = a 17alpha-hydroxy-C21-steroid + oxidized [NADPH--hemoprotein reductase] + H2O + H(+). The catalysed reaction is 17alpha-hydroxyprogesterone + reduced [NADPH--hemoprotein reductase] + O2 = androst-4-ene-3,17-dione + acetate + oxidized [NADPH--hemoprotein reductase] + H2O + 2 H(+). The enzyme catalyses 17alpha-hydroxypregnenolone + reduced [NADPH--hemoprotein reductase] + O2 = 3beta-hydroxyandrost-5-en-17-one + acetate + oxidized [NADPH--hemoprotein reductase] + H2O + 2 H(+). Its pathway is lipid metabolism; steroid biosynthesis. Its function is as follows. Conversion of pregnenolone and progesterone to their 17-alpha-hydroxylated products and subsequently to dehydroepiandrosterone (DHEA) and androstenedione. Catalyzes both the 17-alpha-hydroxylation and the 17,20-lyase reaction. The protein is Steroid 17-alpha-hydroxylase/17,20 lyase (cyp17a1) of Ictalurus punctatus (Channel catfish).